The following is a 353-amino-acid chain: UPF0283 membrane protein YcjF (353 aa).

Transmembrane regions (helical) follow at residues 70–90, 100–120, and 213–233; these read MVMG…VQWT, VALG…GSVV, and ESTL…FIAW.

This sequence belongs to the UPF0283 family.

It is found in the cell inner membrane. This is UPF0283 membrane protein YcjF from Shigella boydii serotype 4 (strain Sb227).